Here is a 744-residue protein sequence, read N- to C-terminus: Elongation factor G, mitochondrial (744 aa).

The N-terminal 25 residues, 1-25 (MTISCLLRIRPALAKSFFENGQRAF), are a transit peptide targeting the mitochondrion. The region spanning 38–315 (ERIRNIGISA…AVLDYLPNPG (278 aa)) is the tr-type G domain. GTP is bound by residues 47-54 (AHIDSGKT), 114-118 (DTPGH), and 168-171 (NKLD).

This sequence belongs to the TRAFAC class translation factor GTPase superfamily. Classic translation factor GTPase family. EF-G/EF-2 subfamily.

The protein resides in the mitochondrion. The protein operates within protein biosynthesis; polypeptide chain elongation. Mitochondrial GTPase that catalyzes the GTP-dependent ribosomal translocation step during translation elongation. During this step, the ribosome changes from the pre-translocational (PRE) to the post-translocational (POST) state as the newly formed A-site-bound peptidyl-tRNA and P-site-bound deacylated tRNA move to the P and E sites, respectively. Catalyzes the coordinated movement of the two tRNA molecules, the mRNA and conformational changes in the ribosome. This is Elongation factor G, mitochondrial from Culex quinquefasciatus (Southern house mosquito).